Here is a 296-residue protein sequence, read N- to C-terminus: tRNA dimethylallyltransferase (296 aa).

2 to 9 (GPTASGKT) is a binding site for ATP. 4-9 (TASGKT) lines the substrate pocket. 3 interaction with substrate tRNA regions span residues 27 to 30 (DSAL), 151 to 155 (QRLSR), and 232 to 237 (RCVGYR).

It belongs to the IPP transferase family. Monomer. It depends on Mg(2+) as a cofactor.

It carries out the reaction adenosine(37) in tRNA + dimethylallyl diphosphate = N(6)-dimethylallyladenosine(37) in tRNA + diphosphate. Functionally, catalyzes the transfer of a dimethylallyl group onto the adenine at position 37 in tRNAs that read codons beginning with uridine, leading to the formation of N6-(dimethylallyl)adenosine (i(6)A). The polypeptide is tRNA dimethylallyltransferase (Shewanella sp. (strain ANA-3)).